Consider the following 176-residue polypeptide: ATP-dependent protease subunit HslV (176 aa).

Thr5 is a catalytic residue. Na(+) contacts are provided by Ala161, Cys164, and Thr167.

It belongs to the peptidase T1B family. HslV subfamily. As to quaternary structure, a double ring-shaped homohexamer of HslV is capped on each side by a ring-shaped HslU homohexamer. The assembly of the HslU/HslV complex is dependent on binding of ATP.

The protein localises to the cytoplasm. The catalysed reaction is ATP-dependent cleavage of peptide bonds with broad specificity.. Allosterically activated by HslU binding. Functionally, protease subunit of a proteasome-like degradation complex believed to be a general protein degrading machinery. This Caldicellulosiruptor bescii (strain ATCC BAA-1888 / DSM 6725 / KCTC 15123 / Z-1320) (Anaerocellum thermophilum) protein is ATP-dependent protease subunit HslV.